Consider the following 358-residue polypeptide: Ornithine cyclodeaminase (358 aa).

The L-ornithine site is built by arginine 52 and lysine 76. Residues threonine 91, arginine 119, 146 to 147, aspartate 168, threonine 208, 231 to 234, lysine 238, and serine 299 each bind NAD(+); these read AQ and VGGD. Arginine 119 is a binding site for L-ornithine. Aspartate 234 is an L-ornithine binding site. Residue aspartate 234 is the Proton donor/acceptor of the active site. Valine 300 contacts L-ornithine.

The protein belongs to the ornithine cyclodeaminase/mu-crystallin family. NAD(+) serves as cofactor.

It carries out the reaction L-ornithine = L-proline + NH4(+). Its pathway is amino-acid biosynthesis; L-proline biosynthesis; L-proline from L-ornithine: step 1/1. Catalyzes the conversion of L-ornithine into L-proline with release of ammonia. In Brucella suis biovar 1 (strain 1330), this protein is Ornithine cyclodeaminase.